A 441-amino-acid polypeptide reads, in one-letter code: Tubulin beta chain (441 aa).

GTP contacts are provided by Gln11, Glu69, Ser138, Gly142, Thr143, Gly144, Asn204, and Asn226. Glu69 lines the Mg(2+) pocket.

Belongs to the tubulin family. As to quaternary structure, dimer of alpha and beta chains. A typical microtubule is a hollow water-filled tube with an outer diameter of 25 nm and an inner diameter of 15 nM. Alpha-beta heterodimers associate head-to-tail to form protofilaments running lengthwise along the microtubule wall with the beta-tubulin subunit facing the microtubule plus end conferring a structural polarity. Microtubules usually have 13 protofilaments but different protofilament numbers can be found in some organisms and specialized cells. The cofactor is Mg(2+).

The protein resides in the cytoplasm. Its subcellular location is the cytoskeleton. Its function is as follows. Tubulin is the major constituent of microtubules, a cylinder consisting of laterally associated linear protofilaments composed of alpha- and beta-tubulin heterodimers. Microtubules grow by the addition of GTP-tubulin dimers to the microtubule end, where a stabilizing cap forms. Below the cap, tubulin dimers are in GDP-bound state, owing to GTPase activity of alpha-tubulin. The polypeptide is Tubulin beta chain (Babesia bovis).